The primary structure comprises 188 residues: Elongation factor P (188 aa).

The protein belongs to the elongation factor P family.

The protein localises to the cytoplasm. It participates in protein biosynthesis; polypeptide chain elongation. In terms of biological role, involved in peptide bond synthesis. Stimulates efficient translation and peptide-bond synthesis on native or reconstituted 70S ribosomes in vitro. Probably functions indirectly by altering the affinity of the ribosome for aminoacyl-tRNA, thus increasing their reactivity as acceptors for peptidyl transferase. In Phocaeicola vulgatus (strain ATCC 8482 / DSM 1447 / JCM 5826 / CCUG 4940 / NBRC 14291 / NCTC 11154) (Bacteroides vulgatus), this protein is Elongation factor P.